Consider the following 317-residue polypeptide: Ribosomal RNA small subunit methyltransferase H (317 aa).

Residues 39–41 (GGH), Asp59, Phe83, Asp104, and Gln111 contribute to the S-adenosyl-L-methionine site.

Belongs to the methyltransferase superfamily. RsmH family.

Its subcellular location is the cytoplasm. The catalysed reaction is cytidine(1402) in 16S rRNA + S-adenosyl-L-methionine = N(4)-methylcytidine(1402) in 16S rRNA + S-adenosyl-L-homocysteine + H(+). Its function is as follows. Specifically methylates the N4 position of cytidine in position 1402 (C1402) of 16S rRNA. In Paraburkholderia phytofirmans (strain DSM 17436 / LMG 22146 / PsJN) (Burkholderia phytofirmans), this protein is Ribosomal RNA small subunit methyltransferase H.